A 568-amino-acid polypeptide reads, in one-letter code: Phosphoprotein (568 aa).

2 disordered regions span residues 1–23 and 38–320; these read MDQD…GGRE and SEPT…GIGE. Basic and acidic residues predominate over residues 7–20; that stretch reads ILKEDSEVEREAPG. Residues 33–41 form an N0 binding region; it reads DAVLSSEPT. Positions 50–59 are enriched in polar residues; it reads LHNTINTPQG. Residue Ser68 is modified to Phosphoserine; by host. Basic and acidic residues predominate over residues 83–101; that stretch reads RSGEESRVSGRTSKPEAEA. Ser125 is modified (phosphoserine; by host). Residues 150–168 are compositionally biased toward basic and acidic residues; sequence GIEDENREMAAHPDKRGED. A compositionally biased stretch (polar residues) spans 191 to 206; that stretch reads ASNNGRSMEPGSSHSA. Phosphoserine; by host is present on residues Ser192, Ser249, Ser257, and Ser260. A multimerization region spans residues 344 to 411; that stretch reads FESSRDASYV…SFRDIYKRFS (68 aa). Residues 364–429 are a coiled coil; it reads YAEMTFNVCG…LLMSNLSTLH (66 aa). The l protein binding stretch occupies residues 412 to 445; that stretch reads EYQKEQNSLLMSNLSTLHIITDRGGKTDNTDSLT. Residues Ser447 and Ser449 each carry the phosphoserine; by host modification. An interaction with the nucleocapsid (N-RNA) region spans residues 479–568; sequence DLIREDEFRD…VEEDIESLTN (90 aa). The tract at residues 496–516 is disordered; that stretch reads QERDTEPRASNASRLLPSKEK. The tract at residues 547–566 is formation of N-RNA complex involved in transcription and replication; sequence KTDQEVKAVMELVEEDIESL.

It belongs to the respirovirus P protein family. In terms of assembly, homotetramer. Interacts (via multimerization domain) with polymerase L; this interaction forms the polymerase complex. Interacts (via N-terminus) with N0; this interaction allows P to chaperon N0 before encapsidation and form the N-P complex. Interacts (via C-terminus) with N-RNA template; this interaction positions the polymerase on the template. In terms of processing, phosphorylated by PKC/PRKCZ, and other unknown kinases. Phosphorylation is necessary for viral transcription and replication. The N-terminus contains the majority of phosphorylated sites. Ser-249 is the major site of phosphorylation, but is not necessary for most functions.

The protein resides in the host cytoplasm. Essential cofactor of the RNA polymerase L that plays a central role in the transcription and replication by forming the polymerase complex with RNA polymerase L and recruiting L to the genomic N-RNA template for RNA synthesis. Also plays a central role in the encapsidation of nascent RNA chains by forming the encapsidation complex with the nucleocapsid protein N (N-P complex). Acts as a chaperone for newly synthesized free N protein, so-called N0, allowing encapsidation of nascent RNA chains during replication. The nucleoprotein protein N prevents excessive phosphorylation of P, which leads to down-regulation of viral transcription/ replication. Participates, together with N, in the formation of viral factories (viroplasms), which are large inclusions in the host cytoplasm where replication takes place. Recruits host PI4KB and remodel the host endoplasmic reticulum membrane to form viral replication factories. This chain is Phosphoprotein (P/V/C), found in Cavia cutleri (Guinea pig).